A 311-amino-acid polypeptide reads, in one-letter code: Tyrosine recombinase XerD (311 aa).

A Core-binding (CB) domain is found at 3–88; that stretch reads DMSAAYVEAF…ALRQFYKFLY (86 aa). In terms of domain architecture, Tyr recombinase spans 109 to 298; that stretch reads TLPKTLSIED…LEERLHDLVQ (190 aa). Catalysis depends on residues Arg156, Lys180, His250, Arg253, and His276. Tyr285 serves as the catalytic O-(3'-phospho-DNA)-tyrosine intermediate.

It belongs to the 'phage' integrase family. XerD subfamily. As to quaternary structure, forms a cyclic heterotetrameric complex composed of two molecules of XerC and two molecules of XerD.

Its subcellular location is the cytoplasm. In terms of biological role, site-specific tyrosine recombinase, which acts by catalyzing the cutting and rejoining of the recombining DNA molecules. The XerC-XerD complex is essential to convert dimers of the bacterial chromosome into monomers to permit their segregation at cell division. It also contributes to the segregational stability of plasmids. The sequence is that of Tyrosine recombinase XerD from Rhizobium meliloti (strain 1021) (Ensifer meliloti).